The chain runs to 149 residues: Arginine repressor (149 aa).

This sequence belongs to the ArgR family.

It is found in the cytoplasm. It functions in the pathway amino-acid biosynthesis; L-arginine biosynthesis [regulation]. Functionally, regulates arginine biosynthesis genes. The sequence is that of Arginine repressor from Geobacillus sp. (strain WCH70).